The primary structure comprises 188 residues: Elongation factor P (188 aa).

At Lys-34 the chain carries N6-(3,6-diaminohexanoyl)-5-hydroxylysine.

The protein belongs to the elongation factor P family. Post-translationally, may be beta-lysylated on the epsilon-amino group of Lys-34 by the combined action of EpmA and EpmB, and then hydroxylated on the C5 position of the same residue by EpmC (if this protein is present). Lysylation is critical for the stimulatory effect of EF-P on peptide-bond formation. The lysylation moiety may extend toward the peptidyltransferase center and stabilize the terminal 3-CCA end of the tRNA. Hydroxylation of the C5 position on Lys-34 may allow additional potential stabilizing hydrogen-bond interactions with the P-tRNA.

It localises to the cytoplasm. The protein operates within protein biosynthesis; polypeptide chain elongation. Functionally, involved in peptide bond synthesis. Alleviates ribosome stalling that occurs when 3 or more consecutive Pro residues or the sequence PPG is present in a protein, possibly by augmenting the peptidyl transferase activity of the ribosome. Modification of Lys-34 is required for alleviation. The sequence is that of Elongation factor P from Pectobacterium atrosepticum (strain SCRI 1043 / ATCC BAA-672) (Erwinia carotovora subsp. atroseptica).